A 318-amino-acid chain; its full sequence is Biotin synthase (318 aa).

Residues 44 to 273 (LCGNKFDLCT…TVQIRLAGGR (230 aa)) enclose the Radical SAM core domain. The [4Fe-4S] cluster site is built by cysteine 62, cysteine 66, and cysteine 69. [2Fe-2S] cluster contacts are provided by serine 106, cysteine 138, cysteine 198, and arginine 268.

It belongs to the radical SAM superfamily. Biotin synthase family. In terms of assembly, homodimer. It depends on [4Fe-4S] cluster as a cofactor. [2Fe-2S] cluster is required as a cofactor.

It carries out the reaction (4R,5S)-dethiobiotin + (sulfur carrier)-SH + 2 reduced [2Fe-2S]-[ferredoxin] + 2 S-adenosyl-L-methionine = (sulfur carrier)-H + biotin + 2 5'-deoxyadenosine + 2 L-methionine + 2 oxidized [2Fe-2S]-[ferredoxin]. The protein operates within cofactor biosynthesis; biotin biosynthesis; biotin from 7,8-diaminononanoate: step 2/2. Its function is as follows. Catalyzes the conversion of dethiobiotin (DTB) to biotin by the insertion of a sulfur atom into dethiobiotin via a radical-based mechanism. The chain is Biotin synthase from Clostridium botulinum (strain Hall / ATCC 3502 / NCTC 13319 / Type A).